Reading from the N-terminus, the 137-residue chain is Basic phospholipase A2 beta-bungarotoxin A1 chain (137 aa).

The N-terminal stretch at 1–9 (AVCVSLLGA) is a signal peptide. The propeptide occupies 10-17 (ANIPPHPL). 6 disulfides stabilise this stretch: Cys-44-Cys-136, Cys-46-Cys-62, Cys-61-Cys-117, Cys-68-Cys-110, Cys-78-Cys-103, and Cys-96-Cys-108. Ca(2+)-binding residues include Tyr-45, Gly-47, and Gly-49. His-65 is a catalytic residue. Asp-66 contributes to the Ca(2+) binding site. Asp-111 is a catalytic residue.

It belongs to the phospholipase A2 family. Group I subfamily. D49 sub-subfamily. Heterodimer; disulfide-linked. The A chain has phospholipase A2 activity and the B chain shows homology with the basic protease inhibitors. Requires Ca(2+) as cofactor. As to expression, expressed by the venom gland.

The protein resides in the secreted. The catalysed reaction is a 1,2-diacyl-sn-glycero-3-phosphocholine + H2O = a 1-acyl-sn-glycero-3-phosphocholine + a fatty acid + H(+). Its function is as follows. Snake venom phospholipase A2 (PLA2) that shows presynaptic neurotoxicity. The A chain has phospholipase activity. PLA2 catalyzes the calcium-dependent hydrolysis of the 2-acyl groups in 3-sn-phosphoglycerides. The protein is Basic phospholipase A2 beta-bungarotoxin A1 chain of Bungarus candidus (Malayan krait).